The following is a 394-amino-acid chain: MFKKFLWRDCVFIIVLITAIALPAYIHTNYPQAFSRFFYPVEAWFTKRDLRCSKNAPHFLRQLLIEMIDEQKSLNNQVAFWHNGQLFHCESGWEDGFRGEKPMRVNSRFRYASVTKVLTSALVLHAINEQKLSLDSKIIELLELPAPKDPRVAAITIKMLLEHSAGFDRLKTYMPMLTMDVKPWCPTNLAQLSKTKLDFDPETQFQYSNVGYCLLGAAIEKAYGRTFQSVAEDYFQLKKYGIAFVGDRFLPDEIQYDYRFESFYSEFYLKHFDFKDSLYAVGGLSGSAADIVQLLAALPKEAPLTIFSHNHTPCSINMLDACYGYALQPYQASGQSYTLWGKSGFFPGVNTDVFLDEQGNILATLRAASAKKTADTLLLRQYAYSLMNEYVNQK.

The polypeptide is Putative fimbrial assembly protein FimD, serogroup D (fimD) (Dichelobacter nodosus (Bacteroides nodosus)).